A 328-amino-acid polypeptide reads, in one-letter code: Complex I intermediate-associated protein 30, mitochondrial (328 aa).

The N-terminal 24 residues, 1 to 24, are a transit peptide targeting the mitochondrion; sequence MSSIHKLLTGIYIHKNFLRPRAAL. Residues 44–54 are compositionally biased toward polar residues; that stretch reads VTSVDRASQQG. A disordered region spans residues 44–80; it reads VTSVDRASQQGKTEEGLQGHDHKEVALDAPSPDRTPE. Residues 55-69 are compositionally biased toward basic and acidic residues; it reads KTEEGLQGHDHKEVA. Ser319 is subject to Phosphoserine.

It belongs to the CIA30 family. As to quaternary structure, part of the mitochondrial complex I assembly/MCIA complex that comprises at least the core subunits TMEM126B, NDUFAF1, ECSIT and ACAD9 and complement subunits such as COA1 and TMEM186. Interacts with ECSIT. Interacts with ACAD9. At early stages of complex I assembly, it is found in intermediate subcomplexes that contain different subunits including NDUFB6, NDUFA6, NDUFA9, NDUFS3, NDUFS7, ND1, ND2 and ND3. Interacts with TMEM70 and TMEM242.

The protein localises to the mitochondrion. It is found in the mitochondrion matrix. In terms of biological role, as part of the MCIA complex, involved in the assembly of the mitochondrial complex I. The polypeptide is Complex I intermediate-associated protein 30, mitochondrial (Mus musculus (Mouse)).